The sequence spans 573 residues: Putative ferric-chelate reductase 1 (573 aa).

A helical transmembrane segment spans residues Val4–Ser24. A Reelin domain is found at Leu15–Ala181. The region spanning Gly213–Gly328 is the DOMON domain. Asn286 and Asn300 each carry an N-linked (GlcNAc...) asparagine glycan. The Cytochrome b561 domain maps to Gln332 to Ala532. Residues Ala369 to Ala389 form a helical membrane-spanning segment. The heme b site is built by His370 and His411. 2 consecutive transmembrane segments (helical) span residues Leu414–Gly434 and His441–Phe461. Heme b contacts are provided by His441 and His477. 3 consecutive transmembrane segments (helical) span residues Cys479 to Phe499, Gly506 to Gln526, and Ile550 to Ile570.

Belongs to the FRRS1 family. Heme b is required as a cofactor.

The protein resides in the membrane. In terms of biological role, putative ferric-chelate reductases reduce Fe(3+) to Fe(2+) before its transport from the endosome to the cytoplasm. This chain is Putative ferric-chelate reductase 1 (frrs1), found in Danio rerio (Zebrafish).